Reading from the N-terminus, the 467-residue chain is UDP-N-acetylmuramate--L-alanine ligase (467 aa).

112–118 (GTHGKTT) provides a ligand contact to ATP.

This sequence belongs to the MurCDEF family.

It is found in the cytoplasm. It catalyses the reaction UDP-N-acetyl-alpha-D-muramate + L-alanine + ATP = UDP-N-acetyl-alpha-D-muramoyl-L-alanine + ADP + phosphate + H(+). The protein operates within cell wall biogenesis; peptidoglycan biosynthesis. Functionally, cell wall formation. In Azoarcus sp. (strain BH72), this protein is UDP-N-acetylmuramate--L-alanine ligase.